We begin with the raw amino-acid sequence, 367 residues long: rRNA processing protein RCL1 (367 aa).

Ser-2 carries the N-acetylserine modification.

It belongs to the RNA 3'-terminal cyclase family. Type 2 subfamily. Interacts directly with BMS1 and the U3 snoRNA to form a stable subcomplex. Component of the 90S small subunit processome also known as 90S pre-ribosome that consists of the 35S pre-rRNA, early-associating ribosomal proteins most of which are part of the small ribosomal subunit, the U3 snoRNA and associated proteins.

It localises to the nucleus. It is found in the nucleolus. Does not have cyclase activity. Plays a role in 40S-ribosomal-subunit biogenesis in the early pre-rRNA processing steps at sites A0, A1 and A2 that are required for proper maturation of the 18S RNA. RCL1 activates BMS1 by promoting GDP/GTP exchange. The chain is rRNA processing protein RCL1 (RCL1) from Saccharomyces cerevisiae (strain ATCC 204508 / S288c) (Baker's yeast).